A 202-amino-acid chain; its full sequence is Imidazoleglycerol-phosphate dehydratase (202 aa).

This sequence belongs to the imidazoleglycerol-phosphate dehydratase family.

The protein localises to the cytoplasm. The catalysed reaction is D-erythro-1-(imidazol-4-yl)glycerol 3-phosphate = 3-(imidazol-4-yl)-2-oxopropyl phosphate + H2O. The protein operates within amino-acid biosynthesis; L-histidine biosynthesis; L-histidine from 5-phospho-alpha-D-ribose 1-diphosphate: step 6/9. The sequence is that of Imidazoleglycerol-phosphate dehydratase from Rhodopirellula baltica (strain DSM 10527 / NCIMB 13988 / SH1).